The following is a 547-amino-acid chain: Chaperonin GroEL 1 (547 aa).

Residues 30 to 33, K51, 87 to 91, G415, and D495 contribute to the ATP site; these read TLGP and DGTTT.

It belongs to the chaperonin (HSP60) family. Forms a cylinder of 14 subunits composed of two heptameric rings stacked back-to-back. Interacts with the co-chaperonin GroES.

Its subcellular location is the cytoplasm. It carries out the reaction ATP + H2O + a folded polypeptide = ADP + phosphate + an unfolded polypeptide.. Its function is as follows. Together with its co-chaperonin GroES, plays an essential role in assisting protein folding. The GroEL-GroES system forms a nano-cage that allows encapsulation of the non-native substrate proteins and provides a physical environment optimized to promote and accelerate protein folding. The protein is Chaperonin GroEL 1 of Azorhizobium caulinodans (strain ATCC 43989 / DSM 5975 / JCM 20966 / LMG 6465 / NBRC 14845 / NCIMB 13405 / ORS 571).